We begin with the raw amino-acid sequence, 688 residues long: MSEDKYCLVTGGAGYIGSHTVVELCEAGYKCIVVDNLSNSSYESVARMELLTGQEIKFAKIDLCELEPLNKLFDDYKIDSVLHFAGLKAVGESTQIPLTYYFNNIVGTINLLECMKSHDVKKLVFSSSATVYGDATRFENMIPIPETCPTGPTNPYGKTKLTIEDMMRDLHFSDKSFSFAILRYFNPIGAHPSGVIGEDPLGIPNNLLPFMAQVAIGRRPKLYVFGDDYDSVDGTPIRDYIHVVDLAKGHLAALKYLEKYAGTCREWNLGTGHGTTVLQMYRAFCDAIGFNFEYVVTARRDGDVLNLTAKCDRATNELEWKTELDVNKACVDLWKWTQDNPFGYQIKGVDSKFFGDKGDFSSRVVSLGKGTSFEVKLANLGATIVDIVVNGCSVVASLDNETEYKDQSNPFFGATVGPYANRIANGTFEINGKRIQLTVSKEDGNVVHSGINSYHSKKFLGPIVKNPEAHIWTADFKYVDEETEFPARLSTLVRYKVDSEKKTLTVEYESKVAGQGSTGANITNHTYFNLNKFNEATIKGSKVQLIDNTGLEVNNKLLPTGNLKKYTQVATFNDSPTEITEKEPVLDFCFVSGLPAKLDTRSSPLTPVFKLSNEDAKLEVEVATTEPTFQVYTGDYVDVKDKYENRAGICCEPGRYIDAVNNPEWKSSVVLPAGETYGHKLSYTFRTL.

A galactowaldenase region spans residues 1–346 (MSEDKYCLVT…TQDNPFGYQI (346 aa)). Residue 6 to 37 (YCLVTGGAGYIGSHTVVELCEAGYKCIVVDNL) participates in NAD(+) binding. A mutarotase region spans residues 347 to 688 (KGVDSKFFGD…HKLSYTFRTL (342 aa)). His-525 serves as the catalytic For mutarotase activity.

The protein in the N-terminal section; belongs to the NAD(P)-dependent epimerase/dehydratase family. It in the C-terminal section; belongs to the aldose epimerase family. NAD(+) is required as a cofactor.

The enzyme catalyses UDP-alpha-D-glucose = UDP-alpha-D-galactose. The catalysed reaction is alpha-D-glucose = beta-D-glucose. The protein operates within carbohydrate metabolism; galactose metabolism. It functions in the pathway carbohydrate metabolism; hexose metabolism. Mutarotase converts alpha-aldose to the beta-anomer. It is active on D-glucose, L-arabinose, D-xylose, D-galactose, maltose and lactose. The protein is Bifunctional protein GAL10 (GAL10) of Kluyveromyces lactis (strain ATCC 8585 / CBS 2359 / DSM 70799 / NBRC 1267 / NRRL Y-1140 / WM37) (Yeast).